Here is a 388-residue protein sequence, read N- to C-terminus: 5-hydroxytryptamine receptor 4 (388 aa).

Topologically, residues M1–K19 are extracellular. N-linked (GlcNAc...) asparagine glycosylation occurs at N7. The chain crosses the membrane as a helical span at residues V20 to V44. Residues C45–K54 lie on the Cytoplasmic side of the membrane. A helical transmembrane segment spans residues T55–A78. Topologically, residues I79–F92 are extracellular. The chain crosses the membrane as a helical span at residues C93–D117. C93 and C184 are disulfide-bonded. D100 lines the serotonin pocket. At R118–M133 the chain is on the cytoplasmic side. Residues T134 to I157 form a helical membrane-spanning segment. The Extracellular segment spans residues M158–V188. A helical membrane pass occupies residues N189–Y212. Residues Y213–A257 lie on the Cytoplasmic side of the membrane. A helical membrane pass occupies residues A258 to P283. Serotonin is bound at residue N279. Over F284 to P290 the chain is Extracellular. A helical membrane pass occupies residues G291–F314. Topologically, residues L315–T388 are cytoplasmic.

The protein belongs to the G-protein coupled receptor 1 family. As to quaternary structure, interacts (via C-terminus 330-346 AA) with GRK5; this interaction is promoted by 5-HT (serotonin).

Its subcellular location is the cell membrane. It localises to the endosome membrane. G-protein coupled receptor for 5-hydroxytryptamine (serotonin), a biogenic hormone that functions as a neurotransmitter, a hormone and a mitogen. Ligand binding causes a conformation change that triggers signaling via guanine nucleotide-binding proteins (G proteins) and modulates the activity of downstream effectors. HTR4 is coupled to G(s) G alpha proteins and mediates activation of adenylate cyclase activity. The chain is 5-hydroxytryptamine receptor 4 (HTR4) from Cavia porcellus (Guinea pig).